The sequence spans 428 residues: Adenylosuccinate synthetase (428 aa).

GTP contacts are provided by residues Gly-11 to Lys-17 and Gly-39 to Thr-41. Asp-12 functions as the Proton acceptor in the catalytic mechanism. Mg(2+)-binding residues include Asp-12 and Gly-39. IMP is bound by residues Asp-12 to Lys-15, Asn-37 to His-40, Thr-130, Arg-144, Asn-226, Thr-241, and Arg-305. His-40 serves as the catalytic Proton donor. Val-301–Arg-307 is a binding site for substrate. GTP-binding positions include Arg-307, Lys-333–Asp-335, and Gly-415–Gly-417.

Belongs to the adenylosuccinate synthetase family. In terms of assembly, homodimer. Mg(2+) is required as a cofactor.

The protein localises to the cytoplasm. It carries out the reaction IMP + L-aspartate + GTP = N(6)-(1,2-dicarboxyethyl)-AMP + GDP + phosphate + 2 H(+). Its pathway is purine metabolism; AMP biosynthesis via de novo pathway; AMP from IMP: step 1/2. Plays an important role in the de novo pathway and in the salvage pathway of purine nucleotide biosynthesis. Catalyzes the first committed step in the biosynthesis of AMP from IMP. This Candida dubliniensis (strain CD36 / ATCC MYA-646 / CBS 7987 / NCPF 3949 / NRRL Y-17841) (Yeast) protein is Adenylosuccinate synthetase.